Here is a 310-residue protein sequence, read N- to C-terminus: MNQINSEFGPDAGAKAPLVVALVGPTASGKTALALELAEHFQLEILNIDSRQLYREMDIGTAKPTAEQQQRVTHHLLDLRSPDQPITLQEFQQEATAAVSQVLKERGVAFLAGGSGLYLKALTQGLQPPAVPPQAELRRQLSSLGQANCHQLLQQADPQAAAKIAPADAVRTQRALEVLYSSGKPMSAQQSTNPPPWRVLELGLNPMELRSRIAQRTLQIYQEGLLEETRQLSQRYGPDLPMLQTIGYGEALEVLQGGLSEAQAIATTTRRTQQFAKRQRTWFRRQHSPHWLTGQDALSEAIRLIEAGLG.

24-31 (GPTASGKT) contacts ATP. Substrate is bound at residue 26 to 31 (TASGKT). Residues 49 to 52 (DSRQ) form an interaction with substrate tRNA region.

It belongs to the IPP transferase family. In terms of assembly, monomer. Mg(2+) serves as cofactor.

It carries out the reaction adenosine(37) in tRNA + dimethylallyl diphosphate = N(6)-dimethylallyladenosine(37) in tRNA + diphosphate. In terms of biological role, catalyzes the transfer of a dimethylallyl group onto the adenine at position 37 in tRNAs that read codons beginning with uridine, leading to the formation of N6-(dimethylallyl)adenosine (i(6)A). This chain is tRNA dimethylallyltransferase, found in Synechococcus sp. (strain CC9311).